Here is a 709-residue protein sequence, read N- to C-terminus: Homeobox-leucine zipper protein HDG4 (709 aa).

A disordered region spans residues 61–92; sequence ESGSGKSTGSGHDPVENTAIEQEPPAAKKKRY. The homeobox DNA-binding region spans 88–147; sequence KKKRYHRHTASQIQQMEALFKENAHPDTKTRLRLSKKLGLSPIQVKFWFQNKRTQIKAQQ. The stretch at 137 to 205 forms a coiled coil; it reads QNKRTQIKAQ…LDRLRSIVSM (69 aa). Positions 229–466 constitute an START domain; the sequence is AEEEKAIDME…LKRQCERMAS (238 aa).

The protein belongs to the HD-ZIP homeobox family. Class IV subfamily. Expressed in flowers.

Its subcellular location is the nucleus. Functionally, probable transcription factor. This is Homeobox-leucine zipper protein HDG4 from Arabidopsis thaliana (Mouse-ear cress).